The primary structure comprises 509 residues: L-aspartate oxidase (509 aa).

FAD-binding positions include Ser-14–Ala-17, Ser-45–Gly-52, and Asp-214. Residue Arg-279 is the Proton donor/acceptor of the active site. FAD contacts are provided by residues Glu-358 and Ser-374–Leu-375. 2 disordered regions span residues Ala-389 to Pro-412 and Asn-486 to His-509. Positions Pro-402–Pro-412 are enriched in basic and acidic residues. Residues Ala-499–His-509 are compositionally biased toward acidic residues.

Belongs to the FAD-dependent oxidoreductase 2 family. NadB subfamily. The cofactor is FAD.

Its subcellular location is the cytoplasm. It catalyses the reaction L-aspartate + O2 = iminosuccinate + H2O2. The protein operates within cofactor biosynthesis; NAD(+) biosynthesis; iminoaspartate from L-aspartate (oxidase route): step 1/1. Catalyzes the oxidation of L-aspartate to iminoaspartate, the first step in the de novo biosynthesis of NAD(+). The protein is L-aspartate oxidase (nadB) of Halobacterium salinarum (strain ATCC 700922 / JCM 11081 / NRC-1) (Halobacterium halobium).